Consider the following 364-residue polypeptide: tRNA 2-selenouridine synthase (364 aa).

The region spanning 14-137 (LLADTPLIDV…LRQTAIQATW (124 aa)) is the Rhodanese domain. The active-site S-selanylcysteine intermediate is the Cys-97.

The protein belongs to the SelU family. Monomer.

It catalyses the reaction 5-methylaminomethyl-2-thiouridine(34) in tRNA + selenophosphate + (2E)-geranyl diphosphate + H2O + H(+) = 5-methylaminomethyl-2-selenouridine(34) in tRNA + (2E)-thiogeraniol + phosphate + diphosphate. The enzyme catalyses 5-methylaminomethyl-2-thiouridine(34) in tRNA + (2E)-geranyl diphosphate = 5-methylaminomethyl-S-(2E)-geranyl-thiouridine(34) in tRNA + diphosphate. The catalysed reaction is 5-methylaminomethyl-S-(2E)-geranyl-thiouridine(34) in tRNA + selenophosphate + H(+) = 5-methylaminomethyl-2-(Se-phospho)selenouridine(34) in tRNA + (2E)-thiogeraniol. It carries out the reaction 5-methylaminomethyl-2-(Se-phospho)selenouridine(34) in tRNA + H2O = 5-methylaminomethyl-2-selenouridine(34) in tRNA + phosphate. In terms of biological role, involved in the post-transcriptional modification of the uridine at the wobble position (U34) of tRNA(Lys), tRNA(Glu) and tRNA(Gln). Catalyzes the conversion of 2-thiouridine (S2U-RNA) to 2-selenouridine (Se2U-RNA). Acts in a two-step process involving geranylation of 2-thiouridine (S2U) to S-geranyl-2-thiouridine (geS2U) and subsequent selenation of the latter derivative to 2-selenouridine (Se2U) in the tRNA chain. The chain is tRNA 2-selenouridine synthase from Salmonella gallinarum (strain 287/91 / NCTC 13346).